Here is a 770-residue protein sequence, read N- to C-terminus: Jhy protein (770 aa).

Disordered regions lie at residues 1–249, 295–438, 493–527, 595–647, and 708–740; these read MNKY…SKQY, TVQN…SFVS, HRHESPSQRAPQSDHHMNTHRSTKTKKPAKQPQAE, ESQL…KRDV, and DYAKTIPKPKPPNLPDQTAKKTKNSRHSEKEGG. Positions 57–71 are enriched in basic and acidic residues; the sequence is SWSDIKDQIQDKDME. The span at 72–85 shows a compositional bias: acidic residues; that stretch reads PDSLEEDSPSETEE. Positions 112-134 are enriched in basic and acidic residues; it reads HQVEDKYSDLRYDPNWKNKREEG. Residues 218 to 229 are compositionally biased toward low complexity; it reads SGLSQYLKSSSS. The span at 295 to 314 shows a compositional bias: basic and acidic residues; it reads TVQNDKEVENTFMDPEDKWH. A compositionally biased stretch (polar residues) spans 340–354; the sequence is RGQSSDAANGQQPSR. Positions 355-370 are enriched in basic residues; it reads RTAKARVRKQRKHQKG. Residues 383-398 show a composition bias toward low complexity; the sequence is QNNQNNPFQQPQNQRQ. Positions 410–438 are enriched in polar residues; that stretch reads AQTNASNPNLQDARTLTHNPKVTSDSFVS. Positions 493–509 are enriched in basic and acidic residues; the sequence is HRHESPSQRAPQSDHHM. Composition is skewed to basic residues over residues 510-521 and 625-642; these read NTHRSTKTKKPA and GKRHRKRSSTKSSKLKGY.

In terms of tissue distribution, expressed in the brain, specifically in hypothalamus, pineal gland, and ependymal cells of the aqueduct of Sylvius, as well as in the choroid plexus of the third ventricle. Expressed in the ependymal cells lining the lateral ventricles (at protein level).

Its function is as follows. Required for the normal development of cilia in brain ependymal cells lining the ventricular surfaces. The protein is Jhy protein of Mus musculus (Mouse).